The chain runs to 369 residues: 3-dehydroquinate synthase (369 aa).

NAD(+)-binding positions include 75–80 (DGEEHK), 109–113 (GVIGD), 133–134 (TT), K146, K155, and 173–176 (TLKT). E188, H251, and H268 together coordinate Zn(2+).

The protein belongs to the sugar phosphate cyclases superfamily. Dehydroquinate synthase family. Requires Co(2+) as cofactor. Zn(2+) serves as cofactor. NAD(+) is required as a cofactor.

Its subcellular location is the cytoplasm. The catalysed reaction is 7-phospho-2-dehydro-3-deoxy-D-arabino-heptonate = 3-dehydroquinate + phosphate. It participates in metabolic intermediate biosynthesis; chorismate biosynthesis; chorismate from D-erythrose 4-phosphate and phosphoenolpyruvate: step 2/7. Functionally, catalyzes the conversion of 3-deoxy-D-arabino-heptulosonate 7-phosphate (DAHP) to dehydroquinate (DHQ). The polypeptide is 3-dehydroquinate synthase (Legionella pneumophila (strain Lens)).